Here is a 307-residue protein sequence, read N- to C-terminus: Olfactory receptor 13G1 (307 aa).

Residues 1-22 (MNHSVVTEFIILGLTKKPELQG) lie on the Extracellular side of the membrane. A glycan (N-linked (GlcNAc...) asparagine) is linked at Asn-2. Residues 23–43 (IIFLFFLIVYLVAFLGNMLII) form a helical membrane-spanning segment. The Cytoplasmic segment spans residues 44–51 (IAKIYNNT). A helical transmembrane segment spans residues 52-72 (LHTPMYVFLLTLAVVDIICTT). The Extracellular portion of the chain corresponds to 73-96 (SIIPKMLGTMLTSENTISYAGCMS). A disulfide bridge connects residues Cys-94 and Cys-186. Residues 97–117 (QLFLFTWSLGAEMVLFTTMAY) form a helical membrane-spanning segment. At 118 to 136 (DRYVAICFPLHYSTIMNHH) the chain is on the cytoplasmic side. A helical transmembrane segment spans residues 137–157 (MCVALLSMVMAIAVTNSWVHT). Residues 158 to 194 (ALIMRLTFCGPNTIDHFFCEIPPLLALSCSPVRINEV) lie on the Extracellular side of the membrane. Residues 195–214 (MVYVADITLAIGDFILTCIS) form a helical membrane-spanning segment. Topologically, residues 215-234 (YGFIIVAILRIRTVEGKRKA) are cytoplasmic. A helical membrane pass occupies residues 235-255 (FSTCSSHLTVVTLYYSPVIYT). Residues 256–268 (YIRPASSYTFERD) lie on the Extracellular side of the membrane. Residues 269-289 (KVVAALYTLVTPTLNPMVYSF) traverse the membrane as a helical segment. Residues 290–307 (QNREMQAGIRKVFAFLKH) are Cytoplasmic-facing.

The protein belongs to the G-protein coupled receptor 1 family.

Its subcellular location is the cell membrane. Its function is as follows. Odorant receptor. The chain is Olfactory receptor 13G1 (OR13G1) from Homo sapiens (Human).